The chain runs to 150 residues: Transcription antitermination protein NusB (150 aa).

This sequence belongs to the NusB family.

In terms of biological role, involved in transcription antitermination. Required for transcription of ribosomal RNA (rRNA) genes. Binds specifically to the boxA antiterminator sequence of the ribosomal RNA (rrn) operons. This is Transcription antitermination protein NusB from Streptococcus pyogenes serotype M2 (strain MGAS10270).